Reading from the N-terminus, the 146-residue chain is L-fucose mutarotase (146 aa).

The active-site Proton donor is the H22. Substrate contacts are provided by residues D30, R109, and 131–133; that span reads YGN.

This sequence belongs to the RbsD / FucU family. FucU mutarotase subfamily. As to quaternary structure, homodecamer.

The protein localises to the cytoplasm. The catalysed reaction is alpha-L-fucose = beta-L-fucose. The protein operates within carbohydrate metabolism; L-fucose metabolism. Its function is as follows. Involved in the anomeric conversion of L-fucose. The chain is L-fucose mutarotase from Glaesserella parasuis serovar 5 (strain SH0165) (Haemophilus parasuis).